Here is a 350-residue protein sequence, read N- to C-terminus: MWLGLRLFHRPFSSLAARGLVYEKHGEPLQVLRLKNVNITHPADNEVRVKMLAAPINPSDINMVQGTYALLPQLPAVGGNEGVGVVVEIGRHVSSMRPGDWVVPVDAGLGTWCTEAVFSEDSLVRVPSDIPVAGAATVSVNPCTAYRLLSDFETLRPGDTIIQNASNSGVGQAVIQIATSLGITTINVVRDREDLSSLIQRLRDLGADHVITEEQLRKPEMKDLFKNCPRPRLALNCVGGKSTTEMLRHLDYGGTMVTYGGMSKQPVTVPVSALIFKNVKLCGFWVTQWKKERAQTDREEIVKMIRDLCDLIRRGKLVPPPSTQRPLEDFSRALQDSQTPFLSRKQILIM.

The N-terminal 12 residues, 1-12, are a transit peptide targeting the mitochondrion; that stretch reads MWLGLRLFHRPF. Tyrosine 68 acts as the Proton donor in catalysis. NADP(+) is bound by residues asparagine 141, 167–170, 190–192, 259–262, 284–286, and lysine 345; these read NSGV, RDR, YGGM, and FWV.

This sequence belongs to the zinc-containing alcohol dehydrogenase family. Quinone oxidoreductase subfamily. As to quaternary structure, homodimer. In terms of tissue distribution, expressed in the developing pronephros.

The protein resides in the mitochondrion. The catalysed reaction is a 2,3-saturated acyl-[ACP] + NADP(+) = a (2E)-enoyl-[ACP] + NADPH + H(+). In terms of biological role, catalyzes the NADPH-dependent reduction of trans-2-enoyl thioesters in mitochondrial fatty acid synthesis (fatty acid synthesis type II). Fatty acid chain elongation in mitochondria uses acyl carrier protein (ACP) as an acyl group carrier, but the enzyme accepts both ACP and CoA thioesters as substrates in vitro. May provide the octanoyl chain used for lipoic acid biosynthesis, regulating protein lipoylation and mitochondrial respiratory activity. Involved in iron homeostasis; affecting Fe-S cluster assembly and ceramide metabolism. Required for proper morphology and bioenergetic functions of mitochondria. Required for maintenance of neurons. Functions in pronephros development, regulating late differentiation of all pronephric tubule segments. The chain is Enoyl-[acyl-carrier-protein] reductase, mitochondrial (mecr) from Xenopus tropicalis (Western clawed frog).